Reading from the N-terminus, the 797-residue chain is Inactive deaminase YBR284W (797 aa).

Residues 627 to 647 form a helical membrane-spanning segment; it reads LVYLFYLSQIPMVVAPLNSIV.

This sequence belongs to the metallo-dependent hydrolases superfamily. Adenosine and AMP deaminases family.

It is found in the membrane. In Saccharomyces cerevisiae (strain ATCC 204508 / S288c) (Baker's yeast), this protein is Inactive deaminase YBR284W.